Here is a 515-residue protein sequence, read N- to C-terminus: RNA-splicing ligase RtcB homolog (515 aa).

Positions 121, 124, 229, 269, and 363 each coordinate Mn(2+). A GMP-binding site is contributed by Asn-228–Glu-232. GMP-binding positions include His-363–Asn-364, Gly-412–Met-415, Ser-419, His-438–Gly-441, and Lys-514. The active-site GMP-histidine intermediate is His-438.

This sequence belongs to the RtcB family. As to quaternary structure, catalytic component of the tRNA-splicing ligase complex. It depends on Mn(2+) as a cofactor.

The enzyme catalyses a 3'-end 3'-phospho-ribonucleotide-RNA + a 5'-end dephospho-ribonucleoside-RNA + GTP = a ribonucleotidyl-ribonucleotide-RNA + GMP + diphosphate. It catalyses the reaction a 3'-end 2',3'-cyclophospho-ribonucleotide-RNA + a 5'-end dephospho-ribonucleoside-RNA + GTP + H2O = a ribonucleotidyl-ribonucleotide-RNA + GMP + diphosphate + H(+). Its function is as follows. Catalytic subunit of the tRNA-splicing ligase complex that acts by directly joining spliced tRNA halves to mature-sized tRNAs by incorporating the precursor-derived splice junction phosphate into the mature tRNA as a canonical 3',5'-phosphodiester. May act as an RNA ligase with broad substrate specificity, and may function toward other RNAs. This chain is RNA-splicing ligase RtcB homolog, found in Theileria annulata.